A 160-amino-acid chain; its full sequence is Ribosomal RNA large subunit methyltransferase H (160 aa).

Residues leucine 76, glycine 108, and 127–132 contribute to the S-adenosyl-L-methionine site; that span reads LGELTW.

Belongs to the RNA methyltransferase RlmH family. Homodimer.

It localises to the cytoplasm. It carries out the reaction pseudouridine(1915) in 23S rRNA + S-adenosyl-L-methionine = N(3)-methylpseudouridine(1915) in 23S rRNA + S-adenosyl-L-homocysteine + H(+). Specifically methylates the pseudouridine at position 1915 (m3Psi1915) in 23S rRNA. The sequence is that of Ribosomal RNA large subunit methyltransferase H from Brucella anthropi (strain ATCC 49188 / DSM 6882 / CCUG 24695 / JCM 21032 / LMG 3331 / NBRC 15819 / NCTC 12168 / Alc 37) (Ochrobactrum anthropi).